Consider the following 40-residue polypeptide: uncharacterized protein (40 aa).

Residues 1-14 (MNRMLSLSVQSQRA) show a composition bias toward polar residues. A disordered region spans residues 1-25 (MNRMLSLSVQSQRAPASPSPYGLKI).

This is an uncharacterized protein from Treponema pallidum (strain Nichols).